The chain runs to 445 residues: SVP1-like protein 2 (445 aa).

WD repeat units follow at residues 218 to 258 and 263 to 302; these read AHKA…LLKE and LDRA…EGTL. Residues 301 to 321 are disordered; that stretch reads TLNPANPEDHQSSGSNGHIKA. The segment covering 312–321 has biased composition (polar residues); that stretch reads SSGSNGHIKA.

The protein belongs to the WD repeat PROPPIN family.

The protein resides in the vacuole membrane. It is found in the cytoplasmic vesicle membrane. Involved in mitochondrial or peroxisomal functions and amino acid signaling pathways. The chain is SVP1-like protein 2 (HSV2) from Candida glabrata (strain ATCC 2001 / BCRC 20586 / JCM 3761 / NBRC 0622 / NRRL Y-65 / CBS 138) (Yeast).